The following is a 45-amino-acid chain: Ice-structuring protein SS-8 (45 aa).

M1 carries the blocked amino end (Met) modification. 3 repeats span residues K9–A21, K22–A33, and K34–A45.

This sequence belongs to the type-I AFP family.

Its function is as follows. Antifreeze proteins lower the blood freezing point. The polypeptide is Ice-structuring protein SS-8 (Myoxocephalus scorpius (Shorthorn sculpin)).